Reading from the N-terminus, the 331-residue chain is DNA-directed RNA polymerase subunit alpha (331 aa).

An alpha N-terminal domain (alpha-NTD) region spans residues 1-230; sequence MKNIKTSPYI…KQMSVFNSEW (230 aa). The segment at 247 to 331 is alpha C-terminal domain (alpha-CTD); that stretch reads LKPLLQKIEA…ALQKRLNKLK (85 aa).

This sequence belongs to the RNA polymerase alpha chain family. As to quaternary structure, homodimer. The RNAP catalytic core consists of 2 alpha, 1 beta/beta' and 1 omega subunit. When a sigma factor is associated with the core the holoenzyme is formed, which can initiate transcription.

It catalyses the reaction RNA(n) + a ribonucleoside 5'-triphosphate = RNA(n+1) + diphosphate. DNA-dependent RNA polymerase catalyzes the transcription of DNA into RNA using the four ribonucleoside triphosphates as substrates. This is DNA-directed RNA polymerase subunit alpha from Wolinella succinogenes (strain ATCC 29543 / DSM 1740 / CCUG 13145 / JCM 31913 / LMG 7466 / NCTC 11488 / FDC 602W) (Vibrio succinogenes).